The chain runs to 93 residues: Red pigment-concentrating hormone (93 aa).

A signal peptide spans 1–21 (MVRAVVATLLVVLVVASCVSA). Gln22 is subject to Pyrrolidone carboxylic acid. Position 29 is a tryptophan amide (Trp29). Residues 33–93 (AAAGGEGTGM…VQCQDEEYLG (61 aa)) constitute a propeptide that is removed on maturation. Residues 34–56 (AAGGEGTGMHPPAGAVVPPPSSL) form a disordered region.

Belongs to the AKH/HRTH/RPCH family. Strongly expressed in the eyestalk and weakly in brain. Not expressed in other tissues tested.

It is found in the secreted. Functionally, this hormone adapts the animal to light backgrounds by stimulating concentration of the pigment of its red body-chromatophores. The chain is Red pigment-concentrating hormone from Penaeus monodon (Giant tiger prawn).